The following is a 200-amino-acid chain: ATP-dependent Clp protease proteolytic subunit (200 aa).

Ser-101 serves as the catalytic Nucleophile. His-126 is a catalytic residue.

This sequence belongs to the peptidase S14 family. In terms of assembly, component of the chloroplastic Clp protease core complex.

It is found in the plastid. It localises to the chloroplast stroma. The enzyme catalyses Hydrolysis of proteins to small peptides in the presence of ATP and magnesium. alpha-casein is the usual test substrate. In the absence of ATP, only oligopeptides shorter than five residues are hydrolyzed (such as succinyl-Leu-Tyr-|-NHMec, and Leu-Tyr-Leu-|-Tyr-Trp, in which cleavage of the -Tyr-|-Leu- and -Tyr-|-Trp bonds also occurs).. Cleaves peptides in various proteins in a process that requires ATP hydrolysis. Has a chymotrypsin-like activity. Plays a major role in the degradation of misfolded proteins. The chain is ATP-dependent Clp protease proteolytic subunit from Adiantum capillus-veneris (Maidenhair fern).